Consider the following 292-residue polypeptide: NAD kinase (292 aa).

Asp-73 acts as the Proton acceptor in catalysis. Residues 73–74, 147–148, His-158, Arg-175, Asp-177, 188–193, and Gln-247 contribute to the NAD(+) site; these read DG, NE, and TAYSLS.

Belongs to the NAD kinase family. A divalent metal cation serves as cofactor.

Its subcellular location is the cytoplasm. The catalysed reaction is NAD(+) + ATP = ADP + NADP(+) + H(+). Involved in the regulation of the intracellular balance of NAD and NADP, and is a key enzyme in the biosynthesis of NADP. Catalyzes specifically the phosphorylation on 2'-hydroxyl of the adenosine moiety of NAD to yield NADP. This is NAD kinase from Enterobacter sp. (strain 638).